A 737-amino-acid chain; its full sequence is Dynein axonemal intermediate chain 7 homolog (737 aa).

The span at 1–15 (MPPKSPNRSGKSTPT) shows a compositional bias: polar residues. Disordered stretches follow at residues 1–61 (MPPK…ERRA), 274–362 (KKVK…DDEE), and 410–452 (STVK…QQPP). Composition is skewed to basic and acidic residues over residues 18–61 (RPGE…ERRA), 276–316 (VKDE…EGRQ), and 333–349 (EETK…DAVK). Polar residues-rich tracts occupy residues 417 to 429 (DNPN…SRVA) and 441 to 451 (PSKTPLEQQQP).

The protein belongs to the DNAI7 family.

This chain is Dynein axonemal intermediate chain 7 homolog (AXP83.9), found in Ciona intestinalis (Transparent sea squirt).